We begin with the raw amino-acid sequence, 491 residues long: MTDLTALTLADAKEGLAAKSFTALELTDAHLAAMESARVLNAYVLETPDKARAMAKEADTRIAKGERSNLLGIPLGIKDLFATRDVRLTACSKILDDFKPPYESTITSQLWRDGAVLLGKLNNDEFAMGSSNETSAFGNVINPWRREGSDTALVPGGSSGGSAAAVAAGLCLGATGTDTGGSIRQPAAFTGIVGIKPTYGRCSRWGVVAFASSLDQAGPFARTVRDSAILLRSMAGHDPKDTTSVDRDVPDYEAAIGKSVKGMRIGIPREYRIGGMSSEIEKLWAQGAEWLKAAGAEIVEISLPHTKYALPAYYVVAPAEASSNLARYDGVRYGARVNGKTIAEMYENTRAAGFGPEVRRRIMIGTYVLSAGYYDAYYLRAQKVRTLIKRDFEEVFAKGIDAILTPATPSAAFGIGEKGKADPVEMYLNDIFTVTVNMAGLPGIAVPAGKDAQGLPLALQLIGRPFDEETLFSLGETIEQAAGRFEPKRWW.

Catalysis depends on charge relay system residues lysine 78 and serine 158. Serine 182 functions as the Acyl-ester intermediate in the catalytic mechanism.

Belongs to the amidase family. GatA subfamily. In terms of assembly, heterotrimer of A, B and C subunits.

The enzyme catalyses L-glutamyl-tRNA(Gln) + L-glutamine + ATP + H2O = L-glutaminyl-tRNA(Gln) + L-glutamate + ADP + phosphate + H(+). Its function is as follows. Allows the formation of correctly charged Gln-tRNA(Gln) through the transamidation of misacylated Glu-tRNA(Gln) in organisms which lack glutaminyl-tRNA synthetase. The reaction takes place in the presence of glutamine and ATP through an activated gamma-phospho-Glu-tRNA(Gln). The polypeptide is Glutamyl-tRNA(Gln) amidotransferase subunit A (Afipia carboxidovorans (strain ATCC 49405 / DSM 1227 / KCTC 32145 / OM5) (Oligotropha carboxidovorans)).